Here is a 421-residue protein sequence, read N- to C-terminus: Gamma-glutamyl phosphate reductase (421 aa).

Belongs to the gamma-glutamyl phosphate reductase family.

It is found in the cytoplasm. It catalyses the reaction L-glutamate 5-semialdehyde + phosphate + NADP(+) = L-glutamyl 5-phosphate + NADPH + H(+). It functions in the pathway amino-acid biosynthesis; L-proline biosynthesis; L-glutamate 5-semialdehyde from L-glutamate: step 2/2. Its function is as follows. Catalyzes the NADPH-dependent reduction of L-glutamate 5-phosphate into L-glutamate 5-semialdehyde and phosphate. The product spontaneously undergoes cyclization to form 1-pyrroline-5-carboxylate. The polypeptide is Gamma-glutamyl phosphate reductase (Ruegeria sp. (strain TM1040) (Silicibacter sp.)).